The sequence spans 93 residues: Small ribosomal subunit protein uS19 (93 aa).

It belongs to the universal ribosomal protein uS19 family.

Its function is as follows. Protein S19 forms a complex with S13 that binds strongly to the 16S ribosomal RNA. The protein is Small ribosomal subunit protein uS19 of Alkaliphilus oremlandii (strain OhILAs) (Clostridium oremlandii (strain OhILAs)).